The following is a 1430-amino-acid chain: 3'-5' RNA helicase YTHDC2 (1430 aa).

The segment at 1–37 (MSRPSSVSPRQPAPGGGGGGGPSPCGPGGGGRAKGLK) is disordered. Over residues 14-33 (PGGGGGGGPSPCGPGGGGRA) the composition is skewed to gly residues. The R3H domain maps to 38–106 (DIRIDEEVKI…NRYLTVKKKD (69 aa)). Residues 203 to 369 (VKIIKENKVV…FGSCPVIYIQ (167 aa)) form the Helicase ATP-binding domain. 216–223 (GETGSGKT) provides a ligand contact to ATP. The short motif at 316–319 (DEVH) is the DEAH box element. 2 ANK repeats span residues 506-538 (TSATALMVAAGRGFASQVEQLISMGANVHSKAS) and 539-571 (NGWMALDWAKHFGQTEIVDLLESYSATLEFGNL). The region spanning 612–784 (LLYNICHSCD…ELCLHTKLLA (173 aa)) is the Helicase C-terminal domain. Phosphoserine occurs at positions 1089, 1090, and 1092. Polar residues predominate over residues 1164 to 1174 (EQSAGLQQPSG). Positions 1164 to 1288 (EQSAGLQQPS…SPSPRPNMPV (125 aa)) are disordered. Positions 1191–1200 (SSWRSNNSRK) are enriched in low complexity. Residue Ser1202 is modified to Phosphoserine. The segment covering 1231–1249 (KYKDRGILHPKRGTEDRSD) has biased composition (basic and acidic residues). Over residues 1250–1264 (QSSLKSTDSSSYPSP) the composition is skewed to low complexity. Residues Ser1263, Ser1267, and Ser1281 each carry the phosphoserine modification. Residues 1288–1418 (VRYFIMKSSN…LVGEQLLQLW (131 aa)) form the YTH domain. RNA contacts are provided by residues 1294–1296 (KSS), Trp1310, and Trp1360.

It belongs to the DEAD box helicase family. DEAH subfamily. Interacts with MEIOC; binds transcripts that regulate the mitotic cell cycle inhibiting progression into metaphase, thereby allowing meiotic prophase to proceed normally. Interacts (via ANK repeats) with XRN1. Interacts with ZCCHC4. Associates with the small ribosomal subunit. Interacts with RBM46. As to expression, expressed in testis. Not detected in spermatogonia next to the tubule wall but is strongly expressed in spermatocytes, suggesting that it is up-regulated in germ cells upon entry into meiosis.

The protein localises to the cytoplasm. It is found in the perinuclear region. The enzyme catalyses ATP + H2O = ADP + phosphate + H(+). 3'-5' RNA helicase that plays a key role in the male and female germline by promoting transition from mitotic to meiotic divisions in stem cells. Specifically recognizes and binds N6-methyladenosine (m6A)-containing RNAs, a modification present at internal sites of mRNAs and some non-coding RNAs that plays a role in the efficiency of RNA processing and stability. Essential for ensuring a successful progression of the meiotic program in the germline by regulating the level of m6A-containing RNAs. Acts by binding and promoting degradation of m6A-containing mRNAs: the 3'-5' RNA helicase activity is required for this process and RNA degradation may be mediated by XRN1 exoribonuclease. Required for both spermatogenesis and oogenesis. This is 3'-5' RNA helicase YTHDC2 from Homo sapiens (Human).